A 244-amino-acid polypeptide reads, in one-letter code: MAQDARRLEPAAVQVRSLVRGFGDKTVLDRLDLDIPEGQFVALLGKSGSGKSTLLRALAGLDYDVEGRGGTLTVPEEVSVAFQDSRLLPWLKVLDNVTLGLGRTGTSRGAAALAEVGLAGREKAWPSELSGGEQQRVALARALVREPRLFLADEPFGALDALTRIKMHALLQELIRRHRPTVLLVTHDVDEAIALADRVLVLDRGQIVVDEIIDIPKPRALGDSKFHEFRTTLLGALGVEVAAQ.

An ABC transporter domain is found at valine 13–phenylalanine 229. Glycine 45 to serine 52 is a binding site for ATP.

This sequence belongs to the ABC transporter superfamily. Aliphatic sulfonates importer (TC 3.A.1.17.2) family. In terms of assembly, the complex is composed of two ATP-binding proteins (SsuB), two transmembrane proteins (SsuC) and a solute-binding protein (SsuA).

The protein resides in the cell membrane. It catalyses the reaction ATP + H2O + aliphatic sulfonate-[sulfonate-binding protein]Side 1 = ADP + phosphate + aliphatic sulfonateSide 2 + [sulfonate-binding protein]Side 1.. Its function is as follows. Part of the ABC transporter complex SsuABC involved in aliphatic sulfonates import. Responsible for energy coupling to the transport system. This is Aliphatic sulfonates import ATP-binding protein SsuB 2 from Rhodococcus jostii (strain RHA1).